A 277-amino-acid chain; its full sequence is Formamidopyrimidine-DNA glycosylase (277 aa).

Proline 2 (schiff-base intermediate with DNA) is an active-site residue. Glutamate 3 acts as the Proton donor in catalysis. Lysine 58 (proton donor; for beta-elimination activity) is an active-site residue. Histidine 94, arginine 113, and arginine 156 together coordinate DNA. Residues 241–277 (LVYGREGVPCPNCGAEHPIQRITQAGRSTFFCPTCQK) form an FPG-type zinc finger. The Proton donor; for delta-elimination activity role is filled by arginine 267.

This sequence belongs to the FPG family. In terms of assembly, monomer. Zn(2+) serves as cofactor.

It catalyses the reaction Hydrolysis of DNA containing ring-opened 7-methylguanine residues, releasing 2,6-diamino-4-hydroxy-5-(N-methyl)formamidopyrimidine.. The enzyme catalyses 2'-deoxyribonucleotide-(2'-deoxyribose 5'-phosphate)-2'-deoxyribonucleotide-DNA = a 3'-end 2'-deoxyribonucleotide-(2,3-dehydro-2,3-deoxyribose 5'-phosphate)-DNA + a 5'-end 5'-phospho-2'-deoxyribonucleoside-DNA + H(+). Functionally, involved in base excision repair of DNA damaged by oxidation or by mutagenic agents. Acts as a DNA glycosylase that recognizes and removes damaged bases. Has a preference for oxidized purines, such as 7,8-dihydro-8-oxoguanine (8-oxoG). Has AP (apurinic/apyrimidinic) lyase activity and introduces nicks in the DNA strand. Cleaves the DNA backbone by beta-delta elimination to generate a single-strand break at the site of the removed base with both 3'- and 5'-phosphates. This Gluconobacter oxydans (strain 621H) (Gluconobacter suboxydans) protein is Formamidopyrimidine-DNA glycosylase.